Consider the following 364-residue polypeptide: Pre-small/secreted glycoprotein (364 aa).

The first 32 residues, 1–32 (MGVTGILQLPRDRFKRTSFFLWVIILFQRTFS), serve as a signal peptide directing secretion. The N-linked (GlcNAc...) asparagine; by host glycan is linked to Asn40. 2 disulfides stabilise this stretch: Cys108–Cys135 and Cys121–Cys147. Residues Asn204, Asn228, Asn238, Asn257, and Asn268 are each glycosylated (N-linked (GlcNAc...) asparagine; by host).

It belongs to the filoviruses glycoprotein family. Homodimer; disulfide-linked. The homodimers are linked by two disulfide bonds in a parallel orientation. In terms of assembly, monomer. Post-translationally, this precursor is processed into mature sGP and delta-peptide by host furin or furin-like proteases. The cleavage site corresponds to the furin optimal cleavage sequence [KR]-X-[KR]-R. In terms of processing, N-glycosylated. O-glycosylated.

It localises to the secreted. Seems to possess an anti-inflammatory activity as it can reverse the barrier-decreasing effects of TNF alpha. Might therefore contribute to the lack of inflammatory reaction seen during infection in spite the of extensive necrosis and massive virus production. Does not seem to be involved in activation of primary macrophages. Does not seem to interact specifically with neutrophils. Functionally, viroporin that permeabilizes mammalian cell plasma membranes. It acts by altering permeation of ionic compounds and small molecules. This activity may lead to viral enterotoxic activity. In Zaire ebolavirus (strain Eckron-76) (ZEBOV), this protein is Pre-small/secreted glycoprotein (GP).